The following is a 522-amino-acid chain: Glucans biosynthesis protein G (522 aa).

Residues 1–33 (MLDNKFGFKQRVASLRWLSAAIMLSVSAVPAWA) form the signal peptide.

This sequence belongs to the OpgD/OpgG family.

It is found in the periplasm. The protein operates within glycan metabolism; osmoregulated periplasmic glucan (OPG) biosynthesis. Functionally, involved in the biosynthesis of osmoregulated periplasmic glucans (OPGs). The polypeptide is Glucans biosynthesis protein G (Pectobacterium atrosepticum (strain SCRI 1043 / ATCC BAA-672) (Erwinia carotovora subsp. atroseptica)).